Here is a 260-residue protein sequence, read N- to C-terminus: Fructose import ATP-binding protein FrcA (260 aa).

The ABC transporter domain occupies 7 to 251 (LTARGLVKRY…DAVAFMTGAK (245 aa)). Residue 39 to 46 (GDNGAGKS) coordinates ATP.

This sequence belongs to the ABC transporter superfamily. The complex is composed of two ATP-binding proteins (FrcA), two transmembrane proteins (FrcC) and a solute-binding protein (FrcB).

It is found in the cell inner membrane. The catalysed reaction is D-fructose(out) + ATP + H2O = D-fructose(in) + ADP + phosphate + H(+). In terms of biological role, part of the high-affinity ABC transporter complex FrcBCA involved in fructose uptake. Is also a high-affinity transporter for ribose and mannose. Responsible for energy coupling to the transport system. The sequence is that of Fructose import ATP-binding protein FrcA from Rhizobium meliloti (Ensifer meliloti).